The following is a 649-amino-acid chain: Putative cystathionine gamma-synthase YML082W (649 aa).

The disordered stretch occupies residues Asn-242–Pro-273. At Ser-287 the chain carries Phosphoserine. Residue Lys-451 is modified to N6-(pyridoxal phosphate)lysine.

This sequence belongs to the trans-sulfuration enzymes family. MET7 subfamily. The cofactor is pyridoxal 5'-phosphate.

It carries out the reaction O-succinyl-L-homoserine + L-cysteine = L,L-cystathionine + succinate + H(+). The protein operates within amino-acid biosynthesis; L-methionine biosynthesis via de novo pathway; L-cystathionine from O-succinyl-L-homoserine: step 1/1. Functionally, catalyzes the formation of L-cystathionine from O-succinyl-L-homoserine (OSHS) and L-cysteine, via a gamma-replacement reaction. In the absence of thiol, catalyzes gamma-elimination to form 2-oxobutanoate, succinate and ammonia. The protein is Putative cystathionine gamma-synthase YML082W of Saccharomyces cerevisiae (strain ATCC 204508 / S288c) (Baker's yeast).